The sequence spans 413 residues: MIAEILATGNEVLSGTIADTNAAHIAQILEAAGIEVRRHTCVGDDLDHIAAAVTEICARADVLLVTGGLGPTGDDLTTAAVARAAKKKLVLDPDAEHSMKTYFVQRKRSMQPSDAKQAMLPEGAQCIVNDIGTAPGFMLAMGHCHVFVMPGVPHEMKQMLETGVMPRIETLQGGGRLYAASRTLTVFGLPESTVGERMAGFGAALPGMRYGIRVRFPEIFIKVSTRQPDSRTAQDLAGQACQWVKKQVGESVFSDAGLALEAEVGRLLVSAKATVAVAESCTGGLIADLLTGVPGSSDYFLFSGVTYANQAKVDVLGVSPQTIETHGAVSEETVKEMADGVRRVAGATFGLATSGIAGPSGGTKEKPVGTVCIGLAGPDGVQTSHVCLSFQNRSMNKRLFAFLALETLRRKLL.

It belongs to the CinA family.

This chain is CinA-like protein, found in Desulfosudis oleivorans (strain DSM 6200 / JCM 39069 / Hxd3) (Desulfococcus oleovorans).